We begin with the raw amino-acid sequence, 363 residues long: Diheme-cytochrome-encapsulin shell fusion protein (363 aa).

The N-terminal stretch at 1 to 36 is a signal peptide; the sequence is MVMGILNTFKKVYAVTGFFALLAVFSLSQVGSSAFA. The segment at 37–74 is diheme c-type cytochrome; that stretch reads ACAKVDDCFSCHTTQELNAVHKNTPYQGQSCIVCHKAF. Heme is bound by residues Cys-44, Cys-47, His-48, Cys-67, Cys-70, and His-71. The tract at residues 75–94 is linker; sequence AADDTCSDAKDGRFAKISSE. The interval 95–363 is encapsulin domain; it reads ININKEDWNK…KCPQAICTLE (269 aa).

It belongs to the encapsulin family. Family 1 subfamily. The encapsulin nanocompartment is probably formed by 180 monomers, with the N-terminus (diheme domain) inside. There are 36 pores where the pentamers meet as well as 3-fold axis channels and dimer channels. The cofactor is heme.

The protein localises to the encapsulin nanocompartment. Functionally, fusion of the shell and cargo protein of a type 1 encapsulin nanocompartment. Protein missing its signal peptide makes 33 nm particles in E.coli (called cEnc), protein missing its signal peptide and diheme domain (residues 1-86, called Enc) makes 29 nm particles. The cEnc nancompartment encloses c-type heme. The cargo protein NIR-HAO (AC P0DV45) is probably targeted to the nanocompartment by its association with the diheme domain in cEnc; removal of the diheme domain in Enc halves the amount of cargo. The chain is Diheme-cytochrome-encapsulin shell fusion protein from Kuenenia stuttgartiensis.